The chain runs to 363 residues: tRNA N6-adenosine threonylcarbamoyltransferase (363 aa).

Fe cation contacts are provided by His-127 and His-131. Substrate-binding positions include 150 to 154 (LISGG), Asp-183, Gly-196, and Asn-290. Asp-318 is a binding site for Fe cation.

It belongs to the KAE1 / TsaD family. Fe(2+) serves as cofactor.

The protein resides in the cytoplasm. It catalyses the reaction L-threonylcarbamoyladenylate + adenosine(37) in tRNA = N(6)-L-threonylcarbamoyladenosine(37) in tRNA + AMP + H(+). Functionally, required for the formation of a threonylcarbamoyl group on adenosine at position 37 (t(6)A37) in tRNAs that read codons beginning with adenine. Is involved in the transfer of the threonylcarbamoyl moiety of threonylcarbamoyl-AMP (TC-AMP) to the N6 group of A37, together with TsaE and TsaB. TsaD likely plays a direct catalytic role in this reaction. In Zymomonas mobilis subsp. mobilis (strain ATCC 31821 / ZM4 / CP4), this protein is tRNA N6-adenosine threonylcarbamoyltransferase.